The sequence spans 240 residues: Lipoprotein-releasing system ATP-binding protein LolD (240 aa).

One can recognise an ABC transporter domain in the interval 15-240 (IRAERLGKTY…GLRELTSAEV (226 aa)). 51 to 58 (GASGAGKS) provides a ligand contact to ATP.

It belongs to the ABC transporter superfamily. Lipoprotein translocase (TC 3.A.1.125) family. The complex is composed of two ATP-binding proteins (LolD) and two transmembrane proteins (LolC and LolE).

The protein resides in the cell inner membrane. Part of the ABC transporter complex LolCDE involved in the translocation of mature outer membrane-directed lipoproteins, from the inner membrane to the periplasmic chaperone, LolA. Responsible for the formation of the LolA-lipoprotein complex in an ATP-dependent manner. The polypeptide is Lipoprotein-releasing system ATP-binding protein LolD (Xylella fastidiosa (strain 9a5c)).